An 89-amino-acid polypeptide reads, in one-letter code: Ixosin-B (89 aa).

The N-terminal stretch at 1-26 (MASGWTHRLLLLAAVVTLGATPIAAA) is a signal peptide. The propeptide occupies 27-57 (SMEYLVTAPGYLTPNADIKITAVVTNPSSAG). The disordered stretch occupies residues 68–89 (SGIQPEQHSSGKSDVRRWRSRY). The span at 76-89 (SSGKSDVRRWRSRY) shows a compositional bias: basic and acidic residues.

In terms of biological role, has antifungal activity against C.albicans. Has antibacterial activity against the Gram-positive bacterium S.aureus and the Gram-negative bacterium E.coli. Lacks hemolytic activity against rabbit erythrocytes. This chain is Ixosin-B, found in Ixodes sinensis (Hard tick).